The sequence spans 585 residues: Eukaryotic translation initiation factor 3 subunit D (585 aa).

Gly residues predominate over residues glycine 110–alanine 130. The disordered stretch occupies residues glycine 110 to alanine 152. An RNA gate region spans residues serine 300–proline 314. Residues valine 560 to glutamate 585 are disordered. The segment covering phenylalanine 565–glutamate 585 has biased composition (acidic residues).

It belongs to the eIF-3 subunit D family. As to quaternary structure, component of the eukaryotic translation initiation factor 3 (eIF-3) complex.

It is found in the cytoplasm. Functionally, mRNA cap-binding component of the eukaryotic translation initiation factor 3 (eIF-3) complex, which is involved in protein synthesis of a specialized repertoire of mRNAs and, together with other initiation factors, stimulates binding of mRNA and methionyl-tRNAi to the 40S ribosome. The eIF-3 complex specifically targets and initiates translation of a subset of mRNAs involved in cell proliferation. In the eIF-3 complex, eif3d specifically recognizes and binds the 7-methylguanosine cap of a subset of mRNAs. The polypeptide is Eukaryotic translation initiation factor 3 subunit D (Aspergillus fumigatus (strain CBS 144.89 / FGSC A1163 / CEA10) (Neosartorya fumigata)).